A 93-amino-acid chain; its full sequence is Small ribosomal subunit protein uS19 (93 aa).

This sequence belongs to the universal ribosomal protein uS19 family.

In terms of biological role, protein S19 forms a complex with S13 that binds strongly to the 16S ribosomal RNA. This chain is Small ribosomal subunit protein uS19 (rpsS), found in Mycobacterium leprae (strain TN).